The primary structure comprises 887 residues: Bifunctional uridylyltransferase/uridylyl-removing enzyme (887 aa).

Residues Met1–Glu337 are uridylyltransferase. A uridylyl-removing region spans residues Val339–Val699. In terms of domain architecture, HD spans Val457 to Leu579. ACT domains lie at Gln700 to Arg782 and Met809 to His887.

Belongs to the GlnD family. Mg(2+) serves as cofactor.

It carries out the reaction [protein-PII]-L-tyrosine + UTP = [protein-PII]-uridylyl-L-tyrosine + diphosphate. The enzyme catalyses [protein-PII]-uridylyl-L-tyrosine + H2O = [protein-PII]-L-tyrosine + UMP + H(+). Uridylyltransferase (UTase) activity is inhibited by glutamine, while glutamine activates uridylyl-removing (UR) activity. Modifies, by uridylylation and deuridylylation, the PII regulatory proteins (GlnB and homologs), in response to the nitrogen status of the cell that GlnD senses through the glutamine level. Under low glutamine levels, catalyzes the conversion of the PII proteins and UTP to PII-UMP and PPi, while under higher glutamine levels, GlnD hydrolyzes PII-UMP to PII and UMP (deuridylylation). Thus, controls uridylylation state and activity of the PII proteins, and plays an important role in the regulation of nitrogen assimilation and metabolism. This Acinetobacter baumannii (strain AB307-0294) protein is Bifunctional uridylyltransferase/uridylyl-removing enzyme.